A 209-amino-acid chain; its full sequence is Imidazole glycerol phosphate synthase subunit HisH (209 aa).

One can recognise a Glutamine amidotransferase type-1 domain in the interval 1-205 (MIAIIDYGMG…QGVVEAWKSS (205 aa)). Residue Cys79 is the Nucleophile of the active site. Catalysis depends on residues His180 and Glu182.

Heterodimer of HisH and HisF.

It localises to the cytoplasm. It catalyses the reaction 5-[(5-phospho-1-deoxy-D-ribulos-1-ylimino)methylamino]-1-(5-phospho-beta-D-ribosyl)imidazole-4-carboxamide + L-glutamine = D-erythro-1-(imidazol-4-yl)glycerol 3-phosphate + 5-amino-1-(5-phospho-beta-D-ribosyl)imidazole-4-carboxamide + L-glutamate + H(+). The enzyme catalyses L-glutamine + H2O = L-glutamate + NH4(+). Its pathway is amino-acid biosynthesis; L-histidine biosynthesis; L-histidine from 5-phospho-alpha-D-ribose 1-diphosphate: step 5/9. Functionally, IGPS catalyzes the conversion of PRFAR and glutamine to IGP, AICAR and glutamate. The HisH subunit catalyzes the hydrolysis of glutamine to glutamate and ammonia as part of the synthesis of IGP and AICAR. The resulting ammonia molecule is channeled to the active site of HisF. The protein is Imidazole glycerol phosphate synthase subunit HisH of Bacillus cereus (strain G9842).